A 121-amino-acid polypeptide reads, in one-letter code: Parathyroid hormone 4 (121 aa).

The N-terminal stretch at 1-24 (MLKMQRSQQRVALMMLMVVAAVHC) is a signal peptide. Positions 25–29 (QESES) are excised as a propeptide. The segment at 77–97 (RSRGAQLYSQPGREESSGGQK) is disordered.

The protein belongs to the parathyroid hormone family. In terms of tissue distribution, specifically expressed in a bilateral cluster of neurons in the dorsal region of the periventricular hypothalamus. Their axons project through the midbrain and hindbrain and down the spinal cord.

The protein localises to the secreted. Neuroendocrine peptide which is produced by a subset of neurons in the hypothalamus. Activates the G-protein coupled receptors pth1ra, pth1rb and pth2r with similar affinity. Receptor binding stimulates intracellular cAMP production. Plays a role in bone mineralization by regulating expression of factors involved in phosphate homeostasis. Important for embryonic bone development. This chain is Parathyroid hormone 4, found in Danio rerio (Zebrafish).